A 633-amino-acid chain; its full sequence is Pesticidal crystal protein Cry2Aa (633 aa).

The protein belongs to the delta endotoxin family.

Its function is as follows. Promotes colloidosmotic lysis by binding to the midgut epithelial cells of both dipteran (Aedes aegypti) and lepidopteran (Manduca sexta) larvae. The chain is Pesticidal crystal protein Cry2Aa (cry2Aa) from Bacillus thuringiensis subsp. kurstaki.